We begin with the raw amino-acid sequence, 1046 residues long: Translation initiation factor IF-2 (1046 aa).

The interval 49–450 is disordered; sequence ALQQGNGGKA…GVMLPRGNGQ (402 aa). Composition is skewed to low complexity over residues 57 to 80 and 89 to 106; these read KAAPRKAAPAKPGAPSPAQAARPA and PAAAERPAAAERPAAAPA. A compositionally biased stretch (pro residues) spans 107–128; sequence APGPRPGPKPAPRPAPAAPAPA. Residues 129 to 169 are compositionally biased toward low complexity; sequence APEFTAPPSAPAAPAAAASGPRPGARPGAPKPGGARPATPG. Residues 177 to 194 show a composition bias toward basic and acidic residues; the sequence is RGERTDRGDRGDRGDRQG. Over residues 195-214 the composition is skewed to low complexity; that stretch reads AARPGGQAPRPGARPAGPRP. Composition is skewed to gly residues over residues 239–248 and 266–280; these read PRPGGAGAPG and GGPGGAPRPQGGPGG. Residues 302 to 318 show a composition bias toward low complexity; sequence GNRPNPGMMPQRPAAGP. Over residues 319-414 the composition is skewed to gly residues; sequence RPGGGGPGGR…GTQGAFGRPG (96 aa). Residues 418 to 427 show a composition bias toward basic residues; that stretch reads RRGRKSKRQR. A tr-type G domain is found at 539–711; that stretch reads ARPPVVTVMG…VVLTADASLD (173 aa). The interval 548–555 is G1; it reads GHVDHGKT. Residue 548 to 555 coordinates GTP; sequence GHVDHGKT. Residues 573–577 are G2; sequence GITQH. The tract at residues 598–601 is G3; the sequence is DTPG. GTP is bound by residues 598–602 and 652–655; these read DTPGH and NKID. A G4 region spans residues 652–655; it reads NKID. Residues 688–690 form a G5 region; the sequence is SAK.

This sequence belongs to the TRAFAC class translation factor GTPase superfamily. Classic translation factor GTPase family. IF-2 subfamily.

The protein localises to the cytoplasm. Its function is as follows. One of the essential components for the initiation of protein synthesis. Protects formylmethionyl-tRNA from spontaneous hydrolysis and promotes its binding to the 30S ribosomal subunits. Also involved in the hydrolysis of GTP during the formation of the 70S ribosomal complex. This is Translation initiation factor IF-2 from Streptomyces avermitilis (strain ATCC 31267 / DSM 46492 / JCM 5070 / NBRC 14893 / NCIMB 12804 / NRRL 8165 / MA-4680).